We begin with the raw amino-acid sequence, 1180 residues long: Neurexin like receptor 1 (1180 aa).

The signal sequence occupies residues 1-20; it reads MSGLCLVLLLSIFAVSQSSG. Residues 21–1108 lie on the Extracellular side of the membrane; it reads ECSDVSFSSV…SQNKQDLVSK (1088 aa). The 167-residue stretch at 124–290 folds into the Laminin G-like 1 domain; that stretch reads PITAFDDSSY…LSPNEVHNQC (167 aa). Asn229 carries an N-linked (GlcNAc...) asparagine glycan. Residues Cys267 and Cys290 are joined by a disulfide bond. 4 N-linked (GlcNAc...) asparagine glycosylation sites follow: Asn302, Asn336, Asn355, and Asn436. The region spanning 444–481 is the EGF-like 1 domain; that stretch reads FQEKCLPNPCENGGGCVQSALDDYVCNCKEGYKGKNCH. Intrachain disulfides connect Cys448/Cys459, Cys453/Cys469, and Cys471/Cys480. Asn522 and Asn636 each carry an N-linked (GlcNAc...) asparagine glycan. In terms of domain architecture, Laminin G-like 2 spans 695–863; that stretch reads TFDPVTFSNR…GVAIGDDGYC (169 aa). Residues 859–896 enclose the EGF-like 2 domain; sequence DDGYCRPDLCQNGGQCVDKYDGYVCDCSMTPFGGSDCT. 3 cysteine pairs are disulfide-bonded: Cys863-Cys874, Cys868-Cys883, and Cys885-Cys895. N-linked (GlcNAc...) asparagine glycans are attached at residues Asn933, Asn949, Asn978, Asn997, Asn1011, and Asn1052. Residues 1109 to 1129 form a helical membrane-spanning segment; it reads AIIGGGILALSLFILCMSSLI. At 1130-1180 the chain is on the cytoplasmic side; it reads CYMRSRPEGVYKTNETGENCSPSRSEEPLVHNTTSNNNNNPTYASNKEYFC. Residues 1142–1152 show a composition bias toward polar residues; it reads TNETGENCSPS. A disordered region spans residues 1142 to 1180; sequence TNETGENCSPSRSEEPLVHNTTSNNNNNPTYASNKEYFC. Low complexity predominate over residues 1161–1171; it reads NTTSNNNNNPT.

This sequence belongs to the neurexin family. As to quaternary structure, interacts (via the intracellular domain) with F-actin; the interaction is required for anchoring F-actin at the membrane for gap junction formation. Highly expressed in pharyngeal g1 and g2 gland cells, pharyngeal muscle cells and the unilateral GABAergic RIS interneuron (at protein level). Expressed in pm5 pharyngeal muscle cells and the nerve ring.

It is found in the cell membrane. The protein localises to the cell junction. Its subcellular location is the gap junction. Its function is as follows. Required for gap junction formation, playing a role in anchoring the cytoskeletal component F-actin to the membrane of adjacent cells and thus facilitating the formation of gap junction channels in embryonic cells, muscle cells and neuronal cells. Plays a role in maintaining gap junction activity to promote pharyngeal muscle contraction. The polypeptide is Neurexin like receptor 1 (Caenorhabditis elegans).